Reading from the N-terminus, the 409-residue chain is Elongation factor Tu (409 aa).

Positions 10–214 constitute a tr-type G domain; that stretch reads KPHVNIGTIG…AVDSYIPTPE (205 aa). The tract at residues 19–26 is G1; sequence GHVDHGKT. 19-26 contacts GTP; the sequence is GHVDHGKT. T26 contacts Mg(2+). The G2 stretch occupies residues 60–64; sequence GITIN. The tract at residues 81–84 is G3; that stretch reads DCPG. Residues 81–85 and 136–139 each bind GTP; these read DCPGH and NKKD. The G4 stretch occupies residues 136–139; the sequence is NKKD. Residues 174–176 form a G5 region; sequence SAK.

The protein belongs to the TRAFAC class translation factor GTPase superfamily. Classic translation factor GTPase family. EF-Tu/EF-1A subfamily. In terms of assembly, monomer.

Its subcellular location is the cytoplasm. The enzyme catalyses GTP + H2O = GDP + phosphate + H(+). Its function is as follows. GTP hydrolase that promotes the GTP-dependent binding of aminoacyl-tRNA to the A-site of ribosomes during protein biosynthesis. The polypeptide is Elongation factor Tu (Microcystis aeruginosa (strain NIES-843 / IAM M-2473)).